The chain runs to 461 residues: Bifunctional protein HldE (461 aa).

A ribokinase region spans residues 1 to 312 (MLEFLSQQKP…IRSFKSMSFE (312 aa)). Position 191-194 (191-194 (NKKE)) interacts with ATP. The active site involves Asp259. The interval 334–461 (FTNGCFDIVH…KIIEKIKDKK (128 aa)) is cytidylyltransferase.

In the N-terminal section; belongs to the carbohydrate kinase PfkB family. This sequence in the C-terminal section; belongs to the cytidylyltransferase family. Homodimer.

The catalysed reaction is D-glycero-beta-D-manno-heptose 7-phosphate + ATP = D-glycero-beta-D-manno-heptose 1,7-bisphosphate + ADP + H(+). It carries out the reaction D-glycero-beta-D-manno-heptose 1-phosphate + ATP + H(+) = ADP-D-glycero-beta-D-manno-heptose + diphosphate. It functions in the pathway nucleotide-sugar biosynthesis; ADP-L-glycero-beta-D-manno-heptose biosynthesis; ADP-L-glycero-beta-D-manno-heptose from D-glycero-beta-D-manno-heptose 7-phosphate: step 1/4. It participates in nucleotide-sugar biosynthesis; ADP-L-glycero-beta-D-manno-heptose biosynthesis; ADP-L-glycero-beta-D-manno-heptose from D-glycero-beta-D-manno-heptose 7-phosphate: step 3/4. Its function is as follows. Catalyzes the phosphorylation of D-glycero-D-manno-heptose 7-phosphate at the C-1 position to selectively form D-glycero-beta-D-manno-heptose-1,7-bisphosphate. Catalyzes the ADP transfer from ATP to D-glycero-beta-D-manno-heptose 1-phosphate, yielding ADP-D-glycero-beta-D-manno-heptose. The chain is Bifunctional protein HldE from Campylobacter jejuni (strain RM1221).